Consider the following 307-residue polypeptide: GTPase Era (307 aa).

An Era-type G domain is found at 14-184 (HSGFVAIVGK…REQILDILPE (171 aa)). The interval 22–29 (GKPNVGKS) is G1. GTP is bound at residue 22-29 (GKPNVGKS). Residues 48–52 (QTTRR) form a G2 region. A G3 region spans residues 69–72 (DTPG). Residues 69-73 (DTPGL) and 131-134 (NKTD) contribute to the GTP site. The G4 stretch occupies residues 131-134 (NKTD). The interval 162-164 (LSA) is G5. The 78-residue stretch at 215 to 292 (LREELPYAVA…FLGLEVIVIP (78 aa)) folds into the KH type-2 domain.

The protein belongs to the TRAFAC class TrmE-Era-EngA-EngB-Septin-like GTPase superfamily. Era GTPase family. As to quaternary structure, monomer.

It localises to the cytoplasm. Its subcellular location is the cell membrane. Its function is as follows. An essential GTPase that binds both GDP and GTP, with rapid nucleotide exchange. Plays a role in 16S rRNA processing and 30S ribosomal subunit biogenesis and possibly also in cell cycle regulation and energy metabolism. The chain is GTPase Era from Deinococcus deserti (strain DSM 17065 / CIP 109153 / LMG 22923 / VCD115).